The following is a 347-amino-acid chain: CDK2-associated and cullin domain-containing protein 1 (347 aa).

The segment covering 1–11 has biased composition (acidic residues); sequence MEESMEEEEML. Disordered stretches follow at residues 1-63 and 320-347; these read MEES…LPGG and RGDQ…RGYR. Positions 34–49 are enriched in pro residues; it reads QPPPAPPLPPPPPPRP.

Belongs to the cullin family. Interacts with CDK2.

Its function is as follows. Cell cycle associated protein capable of promoting cell proliferation through the activation of CDK2 at the G1/S phase transition. The polypeptide is CDK2-associated and cullin domain-containing protein 1 (Cacul1) (Rattus norvegicus (Rat)).